Reading from the N-terminus, the 262-residue chain is Matrix protein (262 aa).

Positions 219-243 (PSPAEGKIGRIKRPTERKEDTPSMT) are disordered.

Belongs to the nucleorhabdovirus type-1 matrix protein family. In terms of assembly, homomultimer. Interacts with nucleoprotein and with the cytoplasmic domain of glycoprotein.

Its subcellular location is the virion membrane. The protein localises to the host endomembrane system. Functionally, plays a major role in assembly and budding of virion. Completely covers the ribonucleoprotein coil and keep it in condensed bullet-shaped form. Inhibits viral transcription and stimulates replication. The protein is Matrix protein (M) of Rice yellow stunt virus (RYSV).